The primary structure comprises 550 residues: CTP synthase (550 aa).

Residues M1–L277 form an amidoligase domain region. Residue S23 coordinates CTP. UTP is bound at residue S23. Residue S24–I29 coordinates ATP. Residue Y64 coordinates L-glutamine. ATP is bound at residue D81. Positions 81 and 151 each coordinate Mg(2+). CTP is bound by residues D158–E160, K198–Q203, and K234. UTP contacts are provided by residues K198–Q203 and K234. V252 serves as a coordination point for ATP. The Glutamine amidotransferase type-1 domain occupies K302 to R549. An L-glutamine-binding site is contributed by G364. Catalysis depends on C391, which acts as the Nucleophile; for glutamine hydrolysis. L-glutamine-binding positions include L392–Q395, E415, and R472. Residues H522 and E524 contribute to the active site.

It belongs to the CTP synthase family. In terms of assembly, homotetramer in the presence of UTP and ATP. Is in a protein concentration-dependent equilibrium between monomer, dimer, and tetramer in the absence of UTP and ATP.

It catalyses the reaction UTP + L-glutamine + ATP + H2O = CTP + L-glutamate + ADP + phosphate + 2 H(+). It carries out the reaction L-glutamine + H2O = L-glutamate + NH4(+). The catalysed reaction is UTP + NH4(+) + ATP = CTP + ADP + phosphate + 2 H(+). It functions in the pathway pyrimidine metabolism; CTP biosynthesis via de novo pathway; CTP from UDP: step 2/2. Allosterically activated by GTP, when glutamine is the substrate. GTP has no effect on the reaction when ammonia is the substrate. The allosteric effector GTP functions by stabilizing the protein conformation that binds the tetrahedral intermediate(s) formed during glutamine hydrolysis. Inhibited by the product CTP, via allosteric rather than competitive inhibition. Its function is as follows. Catalyzes the ATP-dependent amination of UTP to CTP with either L-glutamine or ammonia as the source of nitrogen. Regulates intracellular CTP levels through interactions with the four ribonucleotide triphosphates. In Thermus thermophilus (strain ATCC 27634 / DSM 579 / HB8), this protein is CTP synthase.